The chain runs to 873 residues: K(+)/H(+) antiporter 1 (873 aa).

Topologically, residues 1-23 are extracellular; the sequence is MANTVGGILSGVNPFHYNSSSPL. A helical membrane pass occupies residues 24–44; that stretch reads TLFLFQACLILLVCNLIHIPF. Topologically, residues 45–51 are cytoplasmic; sequence SMMRQPK. A helical membrane pass occupies residues 52-72; the sequence is VISEVISGVILGPTIFGQIPN. At 73–82 the chain is on the extracellular side; the sequence is YTNTIFPTSS. Residues 83–103 traverse the membrane as a helical segment; sequence IPGLNLVANLGIILFMFFLGL. At 104 to 116 the chain is on the cytoplasmic side; it reads EVDIAFIKKHLKK. A helical membrane pass occupies residues 117–137; that stretch reads ALVIGIVTLAVPFGFGCLLAI. The Extracellular segment spans residues 138–154; that stretch reads PLFHTYANKTEGERHIK. The chain crosses the membrane as a helical span at residues 155–175; it reads FSVFMVFIAVSISVTAFPVLC. Residues 176 to 188 lie on the Cytoplasmic side of the membrane; sequence RILNELRLIKDRA. A helical membrane pass occupies residues 189–209; that stretch reads GIVVLAAGIINDIMGWILLAL. At 210–220 the chain is on the extracellular side; it reads SIILSSAEGSP. A helical transmembrane segment spans residues 221–241; that stretch reads VNTVYILLITFAWFLIYFFPL. Residues 242 to 267 lie on the Cytoplasmic side of the membrane; that stretch reads KYLLRWVLIRTHELDRSKPSPLATMC. Residues 268-288 form a helical membrane-spanning segment; it reads ILFIMFISAYFTDIIGVHPIF. The Extracellular segment spans residues 289–316; sequence GAFIAGLVVPRDDHYVVKLTERMEDIPN. Residues 317-337 traverse the membrane as a helical segment; the sequence is IVFIPIYFAVAGLNVDLTLLN. Over 338–341 the chain is Cytoplasmic; it reads EGRD. A helical membrane pass occupies residues 342 to 362; it reads WGYVFATIGIAIFTKIISGTL. Topologically, residues 363-375 are extracellular; it reads TAKLTGLFWREAT. Residues 376 to 396 form a helical membrane-spanning segment; sequence AAGVLMSCKGIVEIVVLTVGL. Residues 397–404 are Cytoplasmic-facing; sequence NAGIISRK. The helical transmembrane segment at 405–425 threads the bilayer; sequence IFGMFVLMALVSTFVTTPLTQ. The Extracellular portion of the chain corresponds to 426-726; sequence LVYPDSYRDG…DRFKRKRFNL (301 aa). A Phosphoserine modification is found at Ser557. A Glycyl lysine isopeptide (Lys-Gly) (interchain with G-Cter in ubiquitin) cross-link involves residue Lys562. Residues 727 to 747 form a helical membrane-spanning segment; sequence LLPKPYLTQSDYLGLYLLLLI. Residues 748 to 873 lie on the Cytoplasmic side of the membrane; it reads CYRDGYNNDN…TLIVHHFSSE (126 aa).

This sequence belongs to the monovalent cation:proton antiporter 2 (CPA2) transporter (TC 2.A.37) family.

It localises to the membrane. Potassium-proton antiport. The sequence is that of K(+)/H(+) antiporter 1 (KHA1) from Saccharomyces cerevisiae (strain ATCC 204508 / S288c) (Baker's yeast).